The following is a 363-amino-acid chain: Ribosome-binding ATPase YchF (363 aa).

Positions 3 to 256 (FKCGIVGLPN…LDDDEKIEFL (254 aa)) constitute an OBG-type G domain. 12–17 (NVGKST) lines the ATP pocket. Serine 16 and threonine 36 together coordinate Mg(2+). The region spanning 278 to 361 (NLQTYFTAGV…QDGDVMHFRF (84 aa)) is the TGS domain.

The protein belongs to the TRAFAC class OBG-HflX-like GTPase superfamily. OBG GTPase family. YchF/OLA1 subfamily. Mg(2+) is required as a cofactor.

ATPase that binds to both the 70S ribosome and the 50S ribosomal subunit in a nucleotide-independent manner. The chain is Ribosome-binding ATPase YchF from Pasteurella multocida (strain Pm70).